We begin with the raw amino-acid sequence, 37 residues long: Large ribosomal subunit protein bL36 (37 aa).

The protein belongs to the bacterial ribosomal protein bL36 family.

The polypeptide is Large ribosomal subunit protein bL36 (Symbiobacterium thermophilum (strain DSM 24528 / JCM 14929 / IAM 14863 / T)).